The chain runs to 267 residues: Indole-3-glycerol phosphate synthase (267 aa).

The protein belongs to the TrpC family.

The enzyme catalyses 1-(2-carboxyphenylamino)-1-deoxy-D-ribulose 5-phosphate + H(+) = (1S,2R)-1-C-(indol-3-yl)glycerol 3-phosphate + CO2 + H2O. It functions in the pathway amino-acid biosynthesis; L-tryptophan biosynthesis; L-tryptophan from chorismate: step 4/5. This chain is Indole-3-glycerol phosphate synthase, found in Deinococcus radiodurans (strain ATCC 13939 / DSM 20539 / JCM 16871 / CCUG 27074 / LMG 4051 / NBRC 15346 / NCIMB 9279 / VKM B-1422 / R1).